A 124-amino-acid polypeptide reads, in one-letter code: Small ribosomal subunit protein uS12 (124 aa).

Residue Asp89 is modified to 3-methylthioaspartic acid. A disordered region spans residues 105–124 (AGVKDRRQSRSKYGAKRPKA). Residues 113-124 (SRSKYGAKRPKA) are compositionally biased toward basic residues.

It belongs to the universal ribosomal protein uS12 family. Part of the 30S ribosomal subunit. Contacts proteins S8 and S17. May interact with IF1 in the 30S initiation complex.

Its function is as follows. With S4 and S5 plays an important role in translational accuracy. Interacts with and stabilizes bases of the 16S rRNA that are involved in tRNA selection in the A site and with the mRNA backbone. Located at the interface of the 30S and 50S subunits, it traverses the body of the 30S subunit contacting proteins on the other side and probably holding the rRNA structure together. The combined cluster of proteins S8, S12 and S17 appears to hold together the shoulder and platform of the 30S subunit. This is Small ribosomal subunit protein uS12 (rpsL) from Synechococcus elongatus (strain ATCC 33912 / PCC 7942 / FACHB-805) (Anacystis nidulans R2).